We begin with the raw amino-acid sequence, 359 residues long: Golgi-resident adenosine 3',5'-bisphosphate 3'-phosphatase (359 aa).

Met-1 carries the N-acetylmethionine modification. Over 1–12 (MAPMGIRLSPLG) the chain is Cytoplasmic. Residues 13 to 33 (VAVFCLLGLGVLYHLYSGFLA) traverse the membrane as a helical segment. Topologically, residues 34-359 (GRFSLFGLGG…LPDLEKTGHK (326 aa)) are lumenal. A disordered region spans residues 86-106 (ESNVLHEKSKGKTREGAEDKM). Asp-110 acts as the Proton acceptor in catalysis. Mg(2+)-binding residues include Glu-133, Asp-174, Leu-176, and Asp-177. Thr-179 (proton acceptor) is an active-site residue. Positions 242 and 245 each coordinate AMP. N-linked (GlcNAc...) asparagine glycosylation is present at Asn-259. AMP contacts are provided by Gly-268 and Lys-272. Asp-300 is a binding site for Mg(2+).

The protein belongs to the inositol monophosphatase superfamily. It depends on Mg(2+) as a cofactor. Contains N-linked glycan resistant to endoglycosydase H.

The protein resides in the golgi apparatus. It localises to the trans-Golgi network membrane. It carries out the reaction adenosine 3',5'-bisphosphate + H2O = AMP + phosphate. It participates in sulfur metabolism. With respect to regulation, strongly inhibited by lithium. Its function is as follows. Exhibits 3'-nucleotidase activity toward adenosine 3',5'-bisphosphate (PAP), namely hydrolyzes adenosine 3',5'-bisphosphate into adenosine 5'-monophosphate (AMP) and a phosphate. May play a role in the formation of skeletal elements derived through endochondral ossification, possibly by clearing adenosine 3',5'-bisphosphate produced by Golgi sulfotransferases during glycosaminoglycan sulfation. Has no activity toward 3'-phosphoadenosine 5'-phosphosulfate (PAPS) or inositol phosphate (IP) substrates including I(1)P, I(1,4)P2, I(1,3,4)P3, I(1,4,5)P3 and I(1,3,4,5)P4. This chain is Golgi-resident adenosine 3',5'-bisphosphate 3'-phosphatase, found in Homo sapiens (Human).